The primary structure comprises 469 residues: 23S rRNA (uracil(1939)-C(5))-methyltransferase RlmD (469 aa).

The TRAM domain maps to 11–69 (PKTSNQRLTVTVDKLDMNGVGVARWQNKPIFIAGVLPDEIVDVKVIEQKSKYARAKLIS). [4Fe-4S] cluster contacts are provided by cysteine 82, cysteine 88, cysteine 91, and cysteine 178. S-adenosyl-L-methionine is bound by residues glutamine 300, phenylalanine 329, asparagine 334, glutamate 350, aspartate 377, and aspartate 399. Cysteine 425 (nucleophile) is an active-site residue.

It belongs to the class I-like SAM-binding methyltransferase superfamily. RNA M5U methyltransferase family. RlmD subfamily.

The enzyme catalyses uridine(1939) in 23S rRNA + S-adenosyl-L-methionine = 5-methyluridine(1939) in 23S rRNA + S-adenosyl-L-homocysteine + H(+). Its function is as follows. Catalyzes the formation of 5-methyl-uridine at position 1939 (m5U1939) in 23S rRNA. The chain is 23S rRNA (uracil(1939)-C(5))-methyltransferase RlmD from Colwellia psychrerythraea (strain 34H / ATCC BAA-681) (Vibrio psychroerythus).